Consider the following 662-residue polypeptide: Histidine decarboxylase (662 aa).

The substrate site is built by Tyr-88 and His-201. At Lys-312 the chain carries N6-(pyridoxal phosphate)lysine. The disordered stretch occupies residues 489–518 (QPSPRAKNVIPPPPGTRGLSLESVSEGGDD).

It belongs to the group II decarboxylase family. As to quaternary structure, homodimer. The cofactor is pyridoxal 5'-phosphate.

The enzyme catalyses L-histidine + H(+) = histamine + CO2. It participates in amine and polyamine biosynthesis; histamine biosynthesis; histamine from L-histidine: step 1/1. Functionally, catalyzes the biosynthesis of histamine from histidine. The polypeptide is Histidine decarboxylase (Hdc) (Mus musculus (Mouse)).